A 178-amino-acid chain; its full sequence is Large ribosomal subunit protein uL6 (178 aa).

Belongs to the universal ribosomal protein uL6 family. As to quaternary structure, part of the 50S ribosomal subunit.

Its function is as follows. This protein binds to the 23S rRNA, and is important in its secondary structure. It is located near the subunit interface in the base of the L7/L12 stalk, and near the tRNA binding site of the peptidyltransferase center. The chain is Large ribosomal subunit protein uL6 from Streptococcus equi subsp. zooepidemicus (strain H70).